The sequence spans 275 residues: MRISPSEAAMKLSLSPPPYADAPVVVLISGLGGSGSYWLPQLAVLVQEYQVVCYDQRGTGNNPDTLAEDYSIAQMAAELHQALVAAGIERYAVVGHALGALVGMQLALDYPASVTVLVSVNGWLRINAHTRRCFQVREQLLHSGGAQAWVEAQPLFLYPADWMAARAPRLEAEDALALAHFQGKNNLLRRLNALKRADFSHHADRIRCPVQIICASDDLLVPTACSSELHAALPDSQKMVMRYGGHACNVTDPETFNALLLNGLASLLHHREAAL.

It belongs to the AB hydrolase superfamily. Hydrolase RutD family.

It catalyses the reaction carbamate + 2 H(+) = NH4(+) + CO2. Functionally, involved in pyrimidine catabolism. May facilitate the hydrolysis of carbamate, a reaction that can also occur spontaneously. This Escherichia coli (strain UTI89 / UPEC) protein is Putative carbamate hydrolase RutD.